The primary structure comprises 167 residues: Alpha-crystallin A chain (167 aa).

Methionine 1 bears the N-acetylmethionine mark. The sHSP domain occupies 47–158 (YYRQSFFRGF…GERPIPVSRE (112 aa)). Zn(2+) is bound by residues histidine 94, glutamate 96, histidine 101, and histidine 148. The interval 143 to 167 (SLDSSHGERPIPVSREEKPTSAPSS) is disordered. Basic and acidic residues predominate over residues 147 to 161 (SHGERPIPVSREEKP). Serine 156 carries an O-linked (GlcNAc) serine glycan.

Belongs to the small heat shock protein (HSP20) family. In terms of assembly, heteropolymer composed of three CRYAA and one CRYAB subunits. Inter-subunit bridging via zinc ions enhances stability, which is crucial as there is no protein turn over in the lens. Can also form homodimers and homotetramers (dimers of dimers) which serve as the building blocks of homooligomers. Within homooligomers, the zinc-binding motif is created from residues of 3 different molecules. His-94 and Glu-96 from one molecule are ligands of the zinc ion, and His-101 and His-148 residues from additional molecules complete the site with tetrahedral coordination geometry.

It is found in the cytoplasm. The protein localises to the nucleus. In terms of biological role, contributes to the transparency and refractive index of the lens. May act as a chaperone, preventing aggregation of various proteins under a wide range of stress conditions. This Pelophylax lessonae (Pool frog) protein is Alpha-crystallin A chain (CRYAA).